Consider the following 300-residue polypeptide: Probable alpha-L-glutamate ligase (300 aa).

Residues 104 to 287 (LQLLARQGID…IAGRMIQWIE (184 aa)) form the ATP-grasp domain. Residues Lys-141, 178-179 (EY), Asp-187, and 211-213 (RSN) each bind ATP. Mg(2+)-binding residues include Asp-248, Glu-260, and Asn-262. Residues Asp-248, Glu-260, and Asn-262 each contribute to the Mn(2+) site.

The protein belongs to the RimK family. Requires Mg(2+) as cofactor. It depends on Mn(2+) as a cofactor.

This is Probable alpha-L-glutamate ligase from Citrobacter koseri (strain ATCC BAA-895 / CDC 4225-83 / SGSC4696).